Here is a 345-residue protein sequence, read N- to C-terminus: MSESGIKKLSQERTREWLASQEDEELESIAESSVVDSLDYDYTEEEEDADQNTSEEISTMTLGTQIATKKHSIISDTIRDLMNSINSIQTLGNVNISNSTNVHIGNVTNINGNIQIIADGLTQNRRDRRHVSPPRDNAPKTPTHFEDDYQDESEERVRSDVFIRRQKFKIPKELSAIIPRSSWLAQKPMDEPLPLQLPVKYVVILHTATESSEKRAINVRLIRDMQCFHIESRGWNDIAYNFLVGCDGNIYEGRGWKTVGAHTLGYNRISLGISFIGCFMKELPTADALNMCRNLLARGVEDGHISTDYRLICHCQCNSTESPGRRLYEEIQTWPHFYNIEEEEQ.

A compositionally biased stretch (basic and acidic residues) spans 1-16; that stretch reads MSESGIKKLSQERTRE. The disordered stretch occupies residues 1–38; sequence MSESGIKKLSQERTREWLASQEDEELESIAESSVVDSL. N-linked (GlcNAc...) asparagine glycans are attached at residues Asn52, Asn95, Asn98, and Asn106. The segment at 124 to 152 is disordered; that stretch reads NRRDRRHVSPPRDNAPKTPTHFEDDYQDE. The region spanning 198-324 is the N-acetylmuramoyl-L-alanine amidase domain; the sequence is PVKYVVILHT…CQCNSTESPG (127 aa). Peptidoglycan is bound by residues His206, 229–240, Arg254, 261–267, and 314–322; these read HIESRGWNDIAY, AHTLGYN, and HCQCNSTES. The N-linked (GlcNAc...) asparagine glycan is linked to Asn318.

Belongs to the N-acetylmuramoyl-L-alanine amidase 2 family. As to quaternary structure, monomer. Peptidoglycan binding induces oligomerization. As to expression, expressed in hemolymph. Localizes at the lumenal surface of the trachea (at protein level).

It localises to the secreted. Functionally, peptidoglycan-recognition protein that plays a key role in innate immunity by binding to murein peptidoglycans (PGN) of Gram-negative bacteria and activating the imd/Relish pathway. Has no activity against on Gram-positive bacteria. Binds to diaminopimelic acid-type PGN (DAP-type PGN), an activator of the imd/Relish pathway. Functions synergistically with PGRP-LC in producing resistance to E.coli and B.megaterium infections, which have the DAP-type peptidoglycan. Acts both upstream and in parallel with PGRP-LC in the imd/Relish pathway, and is required for infection-dependent activation of melanization. Required for Relish processing and nuclear translocation following proteolytic cleavage. Its localization suggests a role in the recognition and subsequent activation of the signaling at the first point of contact with invading bacteria. This is Peptidoglycan-recognition protein LE (PGRP-LE) from Drosophila melanogaster (Fruit fly).